The following is a 115-amino-acid chain: Protein V2 (115 aa).

It belongs to the geminiviridae protein AV2/V2 family. In terms of assembly, interacts with host SGS3.

It localises to the host cytoplasm. It is found in the host perinuclear region. Its function is as follows. Through its interaction with host SGS3, acts as a suppressor of RNA-mediated gene silencing, also known as post-transcriptional gene silencing (PTGS), a mechanism of plant viral defense that limits the accumulation of viral RNAs. This is Protein V2 from Tomato yellow leaf curl Sardinia virus (TYLCSV).